Consider the following 574-residue polypeptide: Cytochrome P450 306a1 (574 aa).

Basic and acidic residues predominate over residues 303–314 (EKEQLRQSKEAD). A disordered region spans residues 303-333 (EKEQLRQSKEADPSQEQSEADEDDEESDEED). Over residues 320–333 (SEADEDDEESDEED) the composition is skewed to acidic residues. Cys-505 contributes to the heme binding site.

This sequence belongs to the cytochrome P450 family. Requires heme as cofactor. As to expression, first seen at the early (syncytial) blastoderm stage 4. During cellularization of the blastoderm (stage 5), stripes of expression appear and remain through to stage 10. Expression becomes undetectable during germ band retraction (stages 11-14). By stage 15, some expression resumes in the primordium of the ring gland, so that by stage 17 strong expression is seen, but only in the ring gland. This specific localization continues throughout the larval instars (at protein level). Expressed in the prothoracic gland cells of the larval ring gland (RG). Levels decline just after the molt to the third instar then increase later during the wandering stage. Low levels of expression are seen in the larval brain and fat body. In the adult, majority of expression is restricted to the ovaries, with low levels in the head and carcass of both sexes.

It localises to the endoplasmic reticulum membrane. The protein localises to the microsome membrane. It carries out the reaction 2,22,25-trideoxyecdysone + 2 reduced [adrenodoxin] + O2 + 2 H(+) = 2,22-dideoxyecdysone + 2 oxidized [adrenodoxin] + H2O. It participates in steroid biosynthesis; ecdysteroid biosynthesis. Its function is as follows. Involved in the metabolism of insect hormones; responsible for ecdysteroid C25-hydroxylase activity. May be involved in the breakdown of synthetic insecticides. This chain is Cytochrome P450 306a1, found in Drosophila melanogaster (Fruit fly).